The primary structure comprises 450 residues: Probable ECA polymerase (450 aa).

Transmembrane regions (helical) follow at residues 6–26 (FSGL…LTWF), 37–57 (VFFS…TSVL), 63–83 (VGVA…CFYA), 118–138 (VILM…NGFL), 155–175 (GVAL…VYFL), 181–201 (AWLF…MIVG), 207–227 (IIIA…ISLW), 228–248 (MLAA…LKRY), 341–361 (LVVM…GLII), 378–398 (YKAA…IVLA), and 410–430 (VFFI…YWLF).

The protein belongs to the WzyE family. Probably part of a complex composed of WzxE, WzyE and WzzE.

It localises to the cell inner membrane. It functions in the pathway bacterial outer membrane biogenesis; enterobacterial common antigen biosynthesis. Probably involved in the polymerization of enterobacterial common antigen (ECA) trisaccharide repeat units. The polypeptide is Probable ECA polymerase (Escherichia coli O139:H28 (strain E24377A / ETEC)).